The following is a 314-amino-acid chain: MRFKGLDLNLLVALDAVMTARNLTAAARKINLSQPAMSAAIARLRTYFRDELFTMRGRELVPTPGAEALAGPVREALLHIQLSIISRDALDPAQSSRRFRVILSDFMTIVFFRRIVDRMAQEAPAVRFELLPFSDEPDDLLRRGEVDFLILPELFMSSAHPKATLFDESLVCVGCRANKQLSRQLTFEQYISMGHVTAKFGRALRPNLEEWFLLEHGLRRRIEVVVQGFSLIPPLLLDTSRIGTMPLRLARHFEKRMPLRIIQPPLPLPTFTEALQWPSFHNTDPASIWMRRILLEEASNMASGDQEPPTRRRC.

An HTH lysR-type domain is found at L6–T63. The segment at residues L23–A42 is a DNA-binding region (H-T-H motif).

It belongs to the LysR transcriptional regulatory family.

NodD regulates the expression of the nodABCFE genes which encode other nodulation proteins. NodD is also a negative regulator of its own expression. Binds flavonoids as inducers. This is Nodulation protein D 1 (nodD1) from Bradyrhizobium diazoefficiens (strain JCM 10833 / BCRC 13528 / IAM 13628 / NBRC 14792 / USDA 110).